A 488-amino-acid polypeptide reads, in one-letter code: Tetratricopeptide repeat protein 23 (488 aa).

TPR repeat units lie at residues 45–78 (LHLCEERAKSYSSSREYKQAIQELVRCVALTRIC), 137–170 (LELFYTLGRALLSLQKFKDASENLIKAERLSKEM), 186–219 (SRIKLSFAQLYQGQKRSKEAFPFYQKALEYTEIT), 228–261 (VQVLRELAGVEQALGLYAAAISHFSRDRLPTPQP), and 398–431 (AETYRALGRADLAQGNNSGAYAKLKKCVQIETFL).

In terms of assembly, associated with the EvC complex composed of EFCAB7, IQCE, EVC2 and EVC.

The protein resides in the cell projection. It is found in the cilium. Its function is as follows. Participates positively in the ciliary Hedgehog (Hh) signaling. This chain is Tetratricopeptide repeat protein 23 (Ttc23), found in Mus musculus (Mouse).